An 844-amino-acid chain; its full sequence is DNA mismatch repair protein MutS (844 aa).

610 to 617 contacts ATP; the sequence is GPNMGGKS.

This sequence belongs to the DNA mismatch repair MutS family.

This protein is involved in the repair of mismatches in DNA. It is possible that it carries out the mismatch recognition step. This protein has a weak ATPase activity. The protein is DNA mismatch repair protein MutS of Francisella tularensis subsp. tularensis (strain WY96-3418).